We begin with the raw amino-acid sequence, 353 residues long: Thiamine-phosphate synthase (353 aa).

Residues 1 to 128 (MKSMPVAPIA…AASAAAIRYG (128 aa)) are unknown. Residues 129–353 (LYDLEVTVLQ…TSLQLLEALR (225 aa)) are thiamine-phosphate synthase. 4-amino-2-methyl-5-(diphosphooxymethyl)pyrimidine contacts are provided by residues 185-189 (QYRNK) and asparagine 217. Residues aspartate 218 and aspartate 237 each coordinate Mg(2+). Residue serine 256 participates in 4-amino-2-methyl-5-(diphosphooxymethyl)pyrimidine binding. 282 to 284 (TAT) is a binding site for 2-[(2R,5Z)-2-carboxy-4-methylthiazol-5(2H)-ylidene]ethyl phosphate. Lysine 285 contacts 4-amino-2-methyl-5-(diphosphooxymethyl)pyrimidine. Glycine 312 contributes to the 2-[(2R,5Z)-2-carboxy-4-methylthiazol-5(2H)-ylidene]ethyl phosphate binding site.

Belongs to the thiamine-phosphate synthase family. Requires Mg(2+) as cofactor.

It carries out the reaction 2-[(2R,5Z)-2-carboxy-4-methylthiazol-5(2H)-ylidene]ethyl phosphate + 4-amino-2-methyl-5-(diphosphooxymethyl)pyrimidine + 2 H(+) = thiamine phosphate + CO2 + diphosphate. It catalyses the reaction 2-(2-carboxy-4-methylthiazol-5-yl)ethyl phosphate + 4-amino-2-methyl-5-(diphosphooxymethyl)pyrimidine + 2 H(+) = thiamine phosphate + CO2 + diphosphate. The enzyme catalyses 4-methyl-5-(2-phosphooxyethyl)-thiazole + 4-amino-2-methyl-5-(diphosphooxymethyl)pyrimidine + H(+) = thiamine phosphate + diphosphate. It functions in the pathway cofactor biosynthesis; thiamine diphosphate biosynthesis; thiamine phosphate from 4-amino-2-methyl-5-diphosphomethylpyrimidine and 4-methyl-5-(2-phosphoethyl)-thiazole: step 1/1. Its function is as follows. Condenses 4-methyl-5-(beta-hydroxyethyl)thiazole monophosphate (THZ-P) and 2-methyl-4-amino-5-hydroxymethyl pyrimidine pyrophosphate (HMP-PP) to form thiamine monophosphate (TMP). This Prochlorococcus marinus (strain MIT 9303) protein is Thiamine-phosphate synthase.